We begin with the raw amino-acid sequence, 874 residues long: Alanine--tRNA ligase (874 aa).

Positions 562, 566, 665, and 669 each coordinate Zn(2+).

Belongs to the class-II aminoacyl-tRNA synthetase family. The cofactor is Zn(2+).

It localises to the cytoplasm. It catalyses the reaction tRNA(Ala) + L-alanine + ATP = L-alanyl-tRNA(Ala) + AMP + diphosphate. In terms of biological role, catalyzes the attachment of alanine to tRNA(Ala) in a two-step reaction: alanine is first activated by ATP to form Ala-AMP and then transferred to the acceptor end of tRNA(Ala). Also edits incorrectly charged Ser-tRNA(Ala) and Gly-tRNA(Ala) via its editing domain. The polypeptide is Alanine--tRNA ligase (Pseudomonas putida (strain GB-1)).